A 351-amino-acid chain; its full sequence is Apolipoprotein L4 (351 aa).

A signal peptide spans 1–21; sequence MEGAALLKIFVVCIWVQQNHP.

The protein belongs to the apolipoprotein L family. As to expression, widely expressed; the highest levels are in spinal cord, placenta, adrenal gland; also detected in spleen, bone marrow, uterus, trachea, mammary gland and testis; levels are low in brain, heart and pancreas.

The protein localises to the secreted. Its function is as follows. May play a role in lipid exchange and transport throughout the body. May participate in reverse cholesterol transport from peripheral cells to the liver. The sequence is that of Apolipoprotein L4 (APOL4) from Homo sapiens (Human).